The primary structure comprises 309 residues: ATP synthase gamma chain (309 aa).

This sequence belongs to the ATPase gamma chain family. F-type ATPases have 2 components, CF(1) - the catalytic core - and CF(0) - the membrane proton channel. CF(1) has five subunits: alpha(3), beta(3), gamma(1), delta(1), epsilon(1). CF(0) has three main subunits: a, b and c.

The protein localises to the cell membrane. Functionally, produces ATP from ADP in the presence of a proton gradient across the membrane. The gamma chain is believed to be important in regulating ATPase activity and the flow of protons through the CF(0) complex. The sequence is that of ATP synthase gamma chain from Mycolicibacterium gilvum (strain PYR-GCK) (Mycobacterium gilvum (strain PYR-GCK)).